We begin with the raw amino-acid sequence, 193 residues long: MIGKLTGTVTDLCQESLILDVGGVGYNVFTTRRLIDSLRTGQNLSLYIEHYFLENINKLYGFECRKSQEVARMLSKVKGINYKIALSLLNHLELGELILAIQNKDESRLKIKGIGEKLVKRIITETYEDFLKLDSHLSGIASSTNVHIASEAVSALVKLGFQHKPSHKVVMEIMTKRPAIEIAELITLALKML.

Positions 1–63 (MIGKLTGTVT…ENINKLYGFE (63 aa)) are domain I. The segment at 64–148 (CRKSQEVARM…GIASSTNVHI (85 aa)) is domain II. The interval 149–150 (AS) is flexible linker. Residues 150 to 193 (SEAVSALVKLGFQHKPSHKVVMEIMTKRPAIEIAELITLALKML) form a domain III region.

It belongs to the RuvA family. In terms of assembly, homotetramer. Forms an RuvA(8)-RuvB(12)-Holliday junction (HJ) complex. HJ DNA is sandwiched between 2 RuvA tetramers; dsDNA enters through RuvA and exits via RuvB. An RuvB hexamer assembles on each DNA strand where it exits the tetramer. Each RuvB hexamer is contacted by two RuvA subunits (via domain III) on 2 adjacent RuvB subunits; this complex drives branch migration. In the full resolvosome a probable DNA-RuvA(4)-RuvB(12)-RuvC(2) complex forms which resolves the HJ.

The protein localises to the cytoplasm. Functionally, the RuvA-RuvB-RuvC complex processes Holliday junction (HJ) DNA during genetic recombination and DNA repair, while the RuvA-RuvB complex plays an important role in the rescue of blocked DNA replication forks via replication fork reversal (RFR). RuvA specifically binds to HJ cruciform DNA, conferring on it an open structure. The RuvB hexamer acts as an ATP-dependent pump, pulling dsDNA into and through the RuvAB complex. HJ branch migration allows RuvC to scan DNA until it finds its consensus sequence, where it cleaves and resolves the cruciform DNA. The polypeptide is Holliday junction branch migration complex subunit RuvA (Neorickettsia sennetsu (strain ATCC VR-367 / Miyayama) (Ehrlichia sennetsu)).